The primary structure comprises 358 residues: Protein RecA (358 aa).

Position 67-74 (67-74 (GPESSGKT)) interacts with ATP.

The protein belongs to the RecA family.

The protein resides in the cytoplasm. Functionally, can catalyze the hydrolysis of ATP in the presence of single-stranded DNA, the ATP-dependent uptake of single-stranded DNA by duplex DNA, and the ATP-dependent hybridization of homologous single-stranded DNAs. It interacts with LexA causing its activation and leading to its autocatalytic cleavage. The sequence is that of Protein RecA from Xenorhabdus bovienii (Xenorhabdus nematophila subsp. bovienii).